Reading from the N-terminus, the 191-residue chain is NF-kappa-B inhibitor-interacting Ras-like protein 2 (191 aa).

The small GTPase-like stretch occupies residues 1-191; it reads MGKSCKVVVC…KNKGSGSVDG (191 aa). 11 to 18 lines the GTP pocket; the sequence is GQAAVGKT. The Effector region signature appears at 35–43; that stretch reads MIETQEDIY. GTP contacts are provided by residues 61-65 and 120-123; these read DTRGL and NKCD. The tract at residues 170–191 is disordered; it reads QPQSKSAFPLSRKNKGSGSVDG.

It belongs to the small GTPase superfamily. Ras family. KappaB-Ras subfamily.

The protein localises to the cytoplasm. Its function is as follows. Atypical Ras-like protein that acts as a potent regulator of NF-kappa-B activity by preventing the degradation of NF-kappa-B inhibitor beta (NFKBIB) by most signals, explaining why NFKBIB is more resistant to degradation. The polypeptide is NF-kappa-B inhibitor-interacting Ras-like protein 2 (NKIRAS2) (Gallus gallus (Chicken)).